A 114-amino-acid polypeptide reads, in one-letter code: T cell receptor beta variable 5-5 (114 aa).

Residues 1–21 form the signal peptide; that stretch reads MGPGLLCWVLLCLLGAGPVDA. Residues 22 to 114 form the Ig-like domain; that stretch reads GVTQSPTHLI…SALYLCASSL (93 aa). Cys42 and Cys110 form a disulfide bridge. An N-linked (GlcNAc...) asparagine glycan is attached at Asn90.

As to quaternary structure, alpha-beta TR is a heterodimer composed of an alpha and beta chain; disulfide-linked. The alpha-beta TR is associated with the transmembrane signaling CD3 coreceptor proteins to form the TR-CD3 (TcR or TCR). The assembly of alpha-beta TR heterodimers with CD3 occurs in the endoplasmic reticulum where a single alpha-beta TR heterodimer associates with one CD3D-CD3E heterodimer, one CD3G-CD3E heterodimer and one CD247 homodimer forming a stable octameric structure. CD3D-CD3E and CD3G-CD3E heterodimers preferentially associate with TR alpha and TR beta chains, respectively. The association of the CD247 homodimer is the last step of TcR assembly in the endoplasmic reticulum and is required for transport to the cell surface.

The protein localises to the cell membrane. V region of the variable domain of T cell receptor (TR) beta chain that participates in the antigen recognition. Alpha-beta T cell receptors are antigen specific receptors which are essential to the immune response and are present on the cell surface of T lymphocytes. Recognize peptide-major histocompatibility (MH) (pMH) complexes that are displayed by antigen presenting cells (APC), a prerequisite for efficient T cell adaptive immunity against pathogens. Binding of alpha-beta TR to pMH complex initiates TR-CD3 clustering on the cell surface and intracellular activation of LCK that phosphorylates the ITAM motifs of CD3G, CD3D, CD3E and CD247 enabling the recruitment of ZAP70. In turn ZAP70 phosphorylates LAT, which recruits numerous signaling molecules to form the LAT signalosome. The LAT signalosome propagates signal branching to three major signaling pathways, the calcium, the mitogen-activated protein kinase (MAPK) kinase and the nuclear factor NF-kappa-B (NF-kB) pathways, leading to the mobilization of transcription factors that are critical for gene expression and essential for T cell growth and differentiation. The T cell repertoire is generated in the thymus, by V-(D)-J rearrangement. This repertoire is then shaped by intrathymic selection events to generate a peripheral T cell pool of self-MH restricted, non-autoaggressive T cells. Post-thymic interaction of alpha-beta TR with the pMH complexes shapes TR structural and functional avidity. In Homo sapiens (Human), this protein is T cell receptor beta variable 5-5.